Consider the following 84-residue polypeptide: Envelope small membrane protein (84 aa).

The Virion surface portion of the chain corresponds to 1-18 (MFMADAYFADTVWYVGQI). The chain crosses the membrane as a helical span at residues 19 to 39 (IFIVAICLLVIIVVVAFLATF). At 40–80 (KLCIQLCGMCNTLVLSPSIYVFNRGRQFYEFYNDVKPPVLD) the chain is on the intravirion side.

It belongs to the betacoronaviruses E protein family. As to quaternary structure, homopentamer. Interacts with membrane protein M in the budding compartment of the host cell, which is located between endoplasmic reticulum and the Golgi complex. Interacts with Nucleoprotein.

The protein localises to the host Golgi apparatus membrane. Plays a central role in virus morphogenesis and assembly. Acts as a viroporin and self-assembles in host membranes forming pentameric protein-lipid pores that allow ion transport. Also plays a role in the induction of apoptosis. In Bovine coronavirus (strain 98TXSF-110-ENT) (BCoV-ENT), this protein is Envelope small membrane protein.